Consider the following 570-residue polypeptide: Pentatricopeptide repeat-containing protein At1g31430 (570 aa).

PPR repeat units lie at residues 10 to 44 (SLLM…GLYP), 45 to 79 (DNFT…GLEF), 80 to 110 (DSYV…MPQR), 111 to 141 (DVVS…MSQE), 147 to 177 (DEGT…VVTE), 181 to 215 (SVRI…NVKC), 216 to 242 (WTSM…SPVK), 243 to 277 (DVVL…GIRP), 278 to 312 (DNFV…RVTV), 313 to 343 (DKVV…IKER), 344 to 378 (DTAS…GVRL), 379 to 414 (DAIT…NVQP), and 415 to 449 (KSEH…SDET). The tract at residues 453–528 (VYCSLLSAAR…FPGCSSIEID (76 aa)) is type E motif. A type E(+) motif region spans residues 529–561 (GVGHEFIVGDDLLSHPKMDEINSMLHQTTNLML).

It belongs to the PPR family. PCMP-E subfamily.

The chain is Pentatricopeptide repeat-containing protein At1g31430 (PCMP-E55) from Arabidopsis thaliana (Mouse-ear cress).